We begin with the raw amino-acid sequence, 444 residues long: Trigger factor (444 aa).

The PPIase FKBP-type domain occupies 166–251; that stretch reads GDQVVIDFKG…VKAVKAPKAA (86 aa).

This sequence belongs to the FKBP-type PPIase family. Tig subfamily.

It localises to the cytoplasm. It carries out the reaction [protein]-peptidylproline (omega=180) = [protein]-peptidylproline (omega=0). Involved in protein export. Acts as a chaperone by maintaining the newly synthesized protein in an open conformation. Functions as a peptidyl-prolyl cis-trans isomerase. The sequence is that of Trigger factor from Cereibacter sphaeroides (strain KD131 / KCTC 12085) (Rhodobacter sphaeroides).